The following is a 505-amino-acid chain: Succinyl-CoA:acetate CoA-transferase (505 aa).

269-273 (GVGNV) contributes to the CoA binding site. The active-site 5-glutamyl coenzyme A thioester intermediate is the E294. 4 residues coordinate CoA: I364, N384, G388, and K408.

The protein belongs to the acetyl-CoA hydrolase/transferase family. In terms of assembly, homodimer.

The enzyme catalyses succinyl-CoA + acetate = succinate + acetyl-CoA. The protein operates within metabolic intermediate biosynthesis; acetyl-CoA biosynthesis. Subject to competitive inhibition by coenzyme A (CoA). In terms of biological role, utilizes succinyl-CoA to convert toxic acetate to acetyl-CoA and succinate. Required for growth on acetic acid and for resistance to high levels of acetic acid. Also has low activity with acetoacetate as substrate. In Acetobacter aceti, this protein is Succinyl-CoA:acetate CoA-transferase.